The following is a 495-amino-acid chain: Genome polyprotein (495 aa).

Topologically, residues 1–445 (MRCIGISNRD…LNQVFGTIYG (445 aa)) are extracellular. 4 disulfides stabilise this stretch: Cys-3–Cys-30, Cys-60–Cys-121, Cys-74–Cys-105, and Cys-92–Cys-116. Residue Asn-67 is glycosylated (N-linked (GlcNAc...) asparagine; by host). Residues 98–111 (DRGWGNGCGLFGKG) form a fusion peptide region. N-linked (GlcNAc...) asparagine; by host glycosylation is present at Asn-153. 2 cysteine pairs are disulfide-bonded: Cys-185–Cys-285 and Cys-302–Cys-333. The helical transmembrane segment at 446-466 (AAFSGVSWTMKILIGVIITCI) threads the bilayer. Residues 467-472 (GMNSRS) lie on the Cytoplasmic side of the membrane. The helical transmembrane segment at 473-493 (TSLSVSLVLVGVVTLYLGGMV) threads the bilayer. Over 494–495 (HA) the chain is Extracellular.

In terms of assembly, homodimer; in the endoplasmic reticulum and Golgi. Interacts with protein prM. Interacts with non-structural protein 1. Post-translationally, N-glycosylated. In terms of processing, specific enzymatic cleavages in vivo yield mature proteins. Cleavages in the lumen of endoplasmic reticulum are performed by host signal peptidase, wereas cleavages in the cytoplasmic side are performed by serine protease NS3. Signal cleavage at the 2K-4B site requires a prior NS3 protease-mediated cleavage at the 4A-2K site.

Its subcellular location is the virion membrane. It localises to the host endoplasmic reticulum membrane. Binds to host cell surface receptor and mediates fusion between viral and cellular membranes. Envelope protein is synthesized in the endoplasmic reticulum in the form of heterodimer with protein prM. They play a role in virion budding in the ER, and the newly formed immature particle is covered with 60 spikes composed of heterodimer between precursor prM and envelope protein E. The virion is transported to the Golgi apparatus where the low pH causes dissociation of PrM-E heterodimers and formation of E homodimers. prM-E cleavage is inefficient, and many virions are only partially matured. These uncleaved prM would play a role in immune evasion. This is Genome polyprotein from Aedes aegypti (Yellowfever mosquito).